Reading from the N-terminus, the 423-residue chain is F-box/LRR-repeat protein 2 (423 aa).

Residues 9-55 (GLINKKLPKELLLRIFSFLDIVTLCRCAQISKAWNILALDGSNWQRV) form the F-box domain. LRR repeat units follow at residues 61–87 (QTDV…SLRG), 88–113 (CIGV…NLNG), 114–139 (CTKI…DLTS), 140–165 (CVSV…NLSW), 166–191 (CDQI…LLRG), 192–217 (CTQL…NLQS), 218–243 (CSRI…CLSG), 244–269 (CSNL…EAAR), 270–295 (CSHL…DLEE), 296–321 (CVLI…SLSH), 322–350 (CELI…ELDN), 351–375 (CLLV…ELYD), and 376–401 (CQQV…AYFA). Residues 80 to 90 (LRKLSLRGCIG) form an interaction with Calmodulin region. Lys201 participates in a covalent cross-link: Glycyl lysine isopeptide (Lys-Gly) (interchain with G-Cter in ubiquitin). Phosphothreonine; by GSK3-beta is present on Thr404. Residue Cys420 is the site of S-geranylgeranyl cysteine attachment. The CAAX motif motif lies at 420-423 (CVIL).

In terms of assembly, part of the SCF (SKP1-CUL1-F-box) E3 ubiquitin-protein ligase complex SCF(FBXL2) composed of CUL1, SKP1, RBX1 and FBXL2. Interacts with calmodulin; may antagonize substrate ubiquitination by SCF(FBXL2). May interact with PIK3R1. Interacts with PTPN13. Post-translationally, phosphorylated by GSK-beta (GSK3B), promoting recognition by FBXO3, leading to its ubiquitination by the SCF(FBXO3) complex. In terms of processing, ubiquitinated at Lys-201 by the SCF(FBXO3) complex in response to lipopolysaccharide (LPS), leading to its degradation by the proteasome.

Its subcellular location is the membrane. Its pathway is protein modification; protein ubiquitination. Functionally, calcium-activated substrate recognition component of the SCF (SKP1-cullin-F-box protein) E3 ubiquitin-protein ligase complex, SCF(FBXL2), which mediates the ubiquitination and subsequent proteasomal degradation of target proteins. Unlike many F-box proteins, FBXL2 does not seem to target phosphodegron within its substrates but rather calmodulin-binding motifs and is thereby antagonized by calmodulin. This is the case for the cyclins CCND2 and CCND3 which polyubiquitination and subsequent degradation are inhibited by calmodulin. Through CCND2 and CCND3 degradation induces cell-cycle arrest in G(0). SCF(FBXL2) also mediates PIK3R2 ubiquitination and proteasomal degradation thereby regulating phosphatidylinositol 3-kinase signaling and autophagy. PCYT1A monoubiquitination by SCF(FBXL2) and subsequent degradation regulates synthesis of phosphatidylcholine, which is utilized for formation of membranes and of pulmonary surfactant. The SCF(FBXL2) complex acts as a regulator of inflammation by mediating ubiquitination and degradation of TRAF proteins (TRAF1, TRAF2, TRAF3, TRAF4, TRAF5 and TRAF6). The SCF(FBXL2) complex acts as a negative regulator of the NLRP3 inflammasome by mediating ubiquitination and degradation of NLRP3. This Mus musculus (Mouse) protein is F-box/LRR-repeat protein 2.